Here is a 196-residue protein sequence, read N- to C-terminus: Heat shock protein beta-8 (196 aa).

A phosphoserine mark is found at serine 24 and serine 57. Threonine 63 is modified (phosphothreonine; by PKC; in vitro). Arginine 71 and arginine 78 each carry asymmetric dimethylarginine. The sHSP domain maps to 74–185; it reads TATARFGVPA…TFGESSFNNE (112 aa). The segment at 176-196 is disordered; it reads TFGESSFNNELPQDSQEVTCT. Residues 177 to 196 show a composition bias toward polar residues; the sequence is FGESSFNNELPQDSQEVTCT.

This sequence belongs to the small heat shock protein (HSP20) family. As to quaternary structure, monomer. Forms a ternary complex with BAG3 and HSPA1A. Component of the chaperone-assisted selective autophagy (CASA) complex consisting of BAG3, HSPA8/HSC70, HSPB8 and STUB1/CHIP. Interacts with HSPB1. Interacts with DNAJB6. Interacts with BAG3. In terms of tissue distribution, predominantly expressed in skeletal muscle and heart.

It is found in the cytoplasm. It localises to the nucleus. Involved in the chaperone-assisted selective autophagy (CASA), a crucial process for protein quality control, particularly in mechanical strained cells and tissues such as muscle. Displays temperature-dependent chaperone activity. The protein is Heat shock protein beta-8 (HSPB8) of Homo sapiens (Human).